A 263-amino-acid chain; its full sequence is Chymotrypsinogen 2 (263 aa).

The signal sequence occupies residues 1 to 18; the sequence is MAFLWLLSCFALLGTAFG. Disulfide bonds link Cys19–Cys140, Cys60–Cys76, Cys154–Cys219, Cys186–Cys200, and Cys209–Cys238. A Peptidase S1 domain is found at 34–261; it reads IVNGEDAVPG…LIPWVQQILQ (228 aa). The active-site Charge relay system is the His75. Residue Ser93 is modified to Phosphoserine. The Charge relay system role is filled by Asp120. The active-site Charge relay system is Ser213.

Belongs to the peptidase S1 family.

It is found in the secreted. The protein localises to the extracellular space. It carries out the reaction Preferential cleavage: Tyr-|-Xaa, Trp-|-Xaa, Phe-|-Xaa, Leu-|-Xaa.. The protein is Chymotrypsinogen 2 (CTRB1) of Canis lupus familiaris (Dog).